We begin with the raw amino-acid sequence, 185 residues long: Large ribosomal subunit protein uL5 (185 aa).

The protein belongs to the universal ribosomal protein uL5 family. Part of the 50S ribosomal subunit; part of the 5S rRNA/L5/L18/L25 subcomplex. Contacts the 5S rRNA and the P site tRNA. Forms a bridge to the 30S subunit in the 70S ribosome.

This is one of the proteins that bind and probably mediate the attachment of the 5S RNA into the large ribosomal subunit, where it forms part of the central protuberance. In the 70S ribosome it contacts protein S13 of the 30S subunit (bridge B1b), connecting the 2 subunits; this bridge is implicated in subunit movement. Contacts the P site tRNA; the 5S rRNA and some of its associated proteins might help stabilize positioning of ribosome-bound tRNAs. In Bacteroides fragilis (strain ATCC 25285 / DSM 2151 / CCUG 4856 / JCM 11019 / LMG 10263 / NCTC 9343 / Onslow / VPI 2553 / EN-2), this protein is Large ribosomal subunit protein uL5.